The chain runs to 465 residues: uncharacterized protein (465 aa).

Over residues 87 to 112 (KTSQQIDSSPPQTPTTSNGSMMTRRQ) the composition is skewed to polar residues. Disordered stretches follow at residues 87–169 (KTSQ…SYDD) and 201–244 (EGYI…NNIF). Positions 113–139 (NANNAISSNNNTNTNVTNGSSSNTSLN) are enriched in low complexity. Over residues 141 to 157 (GDEEQEEEEEEENDEDS) the composition is skewed to acidic residues. The span at 217–244 (NRNNNNNNINKNNNNNINNNNNNNNNIF) shows a compositional bias: low complexity.

This is an uncharacterized protein from Dictyostelium discoideum (Social amoeba).